A 380-amino-acid polypeptide reads, in one-letter code: DNA replication and repair protein RecF (380 aa).

An ATP-binding site is contributed by 30–37; that stretch reads GPNGFGKT.

The protein belongs to the RecF family.

The protein resides in the cytoplasm. Its function is as follows. The RecF protein is involved in DNA metabolism; it is required for DNA replication and normal SOS inducibility. RecF binds preferentially to single-stranded, linear DNA. It also seems to bind ATP. This Mycobacterium sp. (strain KMS) protein is DNA replication and repair protein RecF.